Here is a 375-residue protein sequence, read N- to C-terminus: 23S rRNA (uracil(747)-C(5))-methyltransferase RlmC (375 aa).

Residues Cys-3, Cys-11, Cys-14, and Cys-87 each contribute to the [4Fe-4S] cluster site. S-adenosyl-L-methionine-binding residues include Gln-212, Phe-241, Glu-262, and Asn-307. Cys-334 functions as the Nucleophile in the catalytic mechanism.

It belongs to the class I-like SAM-binding methyltransferase superfamily. RNA M5U methyltransferase family. RlmC subfamily.

It carries out the reaction uridine(747) in 23S rRNA + S-adenosyl-L-methionine = 5-methyluridine(747) in 23S rRNA + S-adenosyl-L-homocysteine + H(+). In terms of biological role, catalyzes the formation of 5-methyl-uridine at position 747 (m5U747) in 23S rRNA. This chain is 23S rRNA (uracil(747)-C(5))-methyltransferase RlmC, found in Shigella boydii serotype 4 (strain Sb227).